Here is a 760-residue protein sequence, read N- to C-terminus: Ferric/cupric reductase transmembrane component 1 (760 aa).

The signal sequence occupies residues 1-18; the sequence is MKIQQLIVFLFAVVLIDA. The Extracellular portion of the chain corresponds to 19-212; sequence RTPKRYSELD…NNNFNLSINY (194 aa). 6 N-linked (GlcNAc...) asparagine glycosylation sites follow: Asn78, Asn91, Asn111, Asn143, Asn155, and Asn207. Residues 119–177 form a disordered region; sequence TTKSSSGSKTSASASKSSKSTGSSNASKSSTNAHGSNSSTSSTSSSSSKSGKGNSGTST. A helical membrane pass occupies residues 213–233; it reads GSGLLGYWAGILAIAIFANMI. At 234-288 the chain is on the cytoplasmic side; sequence KKMFPSLTNYLSGSISNLFRKHLFLPATFRKKKAQEFSIGVYGFFDGLIPTRLET. The helical transmembrane segment at 289–309 threads the bilayer; it reads IIVVIFVVLTGLFSALHIHHV. Residues 310–324 lie on the Extracellular side of the membrane; sequence KDNPQYATKNAELGH. Residues 325-345 form a helical membrane-spanning segment; sequence LIADRTGILGTFLIPLLILFG. In terms of domain architecture, Ferric oxidoreductase spans 330-445; sequence TGILGTFLIP…HIVLVVFFVV (116 aa). At 346–371 the chain is on the cytoplasmic side; that stretch reads GRNNFLQWLTGWDFATFIMYHRWISR. His366 and His380 together coordinate heme. A helical membrane pass occupies residues 372-392; sequence VDVLLIIVHAITFSVSDKATG. The Extracellular portion of the chain corresponds to 393-403; that stretch reads KYNTRMKRDFM. A helical transmembrane segment spans residues 404-424; sequence IWGTVSTICGGFILFQAMLFF. The Cytoplasmic segment spans residues 425–430; the sequence is RRKCYE. Residues 431–451 form a helical membrane-spanning segment; sequence VFFLIHIVLVVFFVVGGYYHL. Heme-binding residues include His436 and His450. Over 452-760 the chain is Extracellular; it reads ESQGYGDFMW…EYHEQLQTWA (309 aa). One can recognise an FAD-binding FR-type domain in the interval 465–583; sequence AVWAFDRVVR…EGPYGEPSSA (119 aa). 575–578 serves as a coordination point for NADP(+); the sequence is GPYG. Asn615 carries N-linked (GlcNAc...) asparagine glycosylation. 726–727 is an NADP(+) binding site; the sequence is CG. N-linked (GlcNAc...) asparagine glycosylation occurs at Asn744.

This sequence belongs to the ferric reductase (FRE) family. It depends on FAD as a cofactor. Requires heme as cofactor.

Its subcellular location is the cell membrane. The enzyme catalyses 2 a Fe(II)-siderophore + NADP(+) + H(+) = 2 a Fe(III)-siderophore + NADPH. Its function is as follows. Ferric reductase responsible for reducing extracellular iron and copper prior to import. Catalyzes the reductive uptake of Fe(3+)-salts and Fe(3+) bound to catecholate or hydroxamate siderophores. Fe(3+) is reduced to Fe(2+), which then dissociates from the siderophore and can be imported by the high-affinity Fe(2+) transport complex in the plasma membrane. Also participates in Cu(2+) reduction and Cu(+) uptake. Involved in maintenance of cell wall integrity (CWI), mitochondrial function, and interaction between the pathogen and the host. This Candida albicans (strain SC5314 / ATCC MYA-2876) (Yeast) protein is Ferric/cupric reductase transmembrane component 1.